A 307-amino-acid chain; its full sequence is MKKLRIGVVGLGGIAQKAWLPVLAAASDWTLQGAWSPTRAKALPICESWRIPYADSLSSLAASCDAVFVHSSTASHFDVVSTLLNAGVHVCVDKPLAENLRDAERLVELAARKKLTLMVGFNRRFAPLYGELKTQLATAASLRMDKHRSNSVGPHDLYFTLLDDYLHVVDTALWLSGGKASLDGGTLLTNDAGEMLFAEHHFSAGPLQITTCMHRRAGSQRETVQAVTDGALIDITDMREWREERGQGVVHKPIPGWQSTLEQRGFVGCARHFIECVQNQTVPQTAGEQAVLAQRIVDKIWRDAMSE.

It belongs to the Gfo/Idh/MocA family.

The chain is Putative oxidoreductase YceM (yceM) from Escherichia coli (strain K12).